Reading from the N-terminus, the 155-residue chain is Ribonuclease H (155 aa).

Positions 4–145 constitute an RNase H type-1 domain; the sequence is QQKVVEIYTD…ADALARKAIA (142 aa). Mg(2+) contacts are provided by D13, E51, D73, and D137.

It belongs to the RNase H family. As to quaternary structure, monomer. Mg(2+) is required as a cofactor.

It is found in the cytoplasm. The enzyme catalyses Endonucleolytic cleavage to 5'-phosphomonoester.. Endonuclease that specifically degrades the RNA of RNA-DNA hybrids. The protein is Ribonuclease H of Bartonella tribocorum (strain CIP 105476 / IBS 506).